Reading from the N-terminus, the 64-residue chain is Lantibiotic actagardine (64 aa).

A propeptide spanning residues 1–45 is cleaved from the precursor; sequence MSALAIEKSWKDVDLRDGATSHPAGLGFGELTFEDLREDRTIYAA. Positions 46 to 51 form a cross-link, lanthionine (Ser-Cys); it reads SSGWVC. 2 consecutive cross-links (beta-methyllanthionine (Thr-Cys)) follow at residues 52–57 and 54–62; these read TLTIEC and TIECGTVIC. Positions 59–64 form a cross-link, beta-methyllanthionine sulfoxide (Thr-Cys); it reads TVICAC.

This sequence belongs to the type B lantibiotic family. Maturation of lantibiotics involves the enzymatic conversion of Thr, and Ser into dehydrated AA by the enzyme garM and the formation of thioether bonds with cysteine. The 59-64 beta-methyllanthionine thioether bond is oxidized to a sulfoxide by the monooxygenase GarO. This is followed by membrane translocation and cleavage of the modified precursor. In terms of processing, the sulfoxide group of the 59-64 beta-methyllanthionine thioether bond is mildly important for activity, since the antibacterial activity of deoxyactagardine is marginally lower compared with oxidized actagardine.

Functionally, has potent antibacterial activity against some Gram-positive bacteria. Has good antistreptococcal activity. Inhibits cell wall biosynthesis by binding to lipid II and blocking transglycosylation. The protein is Lantibiotic actagardine of Actinoplanes garbadinensis.